The sequence spans 398 residues: Cell division protein FtsZ (398 aa).

GTP contacts are provided by residues 21–25 (GGGGN), 108–110 (GTG), Glu-139, Arg-143, and Asp-187.

Belongs to the FtsZ family. In terms of assembly, homodimer. Polymerizes to form a dynamic ring structure in a strictly GTP-dependent manner. Interacts directly with several other division proteins.

The protein localises to the cytoplasm. In terms of biological role, essential cell division protein that forms a contractile ring structure (Z ring) at the future cell division site. The regulation of the ring assembly controls the timing and the location of cell division. One of the functions of the FtsZ ring is to recruit other cell division proteins to the septum to produce a new cell wall between the dividing cells. Binds GTP and shows GTPase activity. The sequence is that of Cell division protein FtsZ from Pseudomonas putida (strain ATCC 47054 / DSM 6125 / CFBP 8728 / NCIMB 11950 / KT2440).